The primary structure comprises 144 residues: Interleukin-9 (144 aa).

A signal peptide spans 1 to 18 (MLLAMVLTSALLLCSVAG). A Pyrrolidone carboxylic acid modification is found at Q19. Residues N50, N63, N78, and N114 are each glycosylated (N-linked (GlcNAc...) asparagine).

The protein belongs to the IL-7/IL-9 family. As to quaternary structure, interacts with IL9R. Interacts with IL2RG.

The protein localises to the secreted. Multifunctional cytokine secreted mainly by T-helper 2 lymphocytes and also mast cells or NKT cells that plays important roles in the immune response against parasites. Affects intestinal epithelial permeability and adaptive immunity. In addition, induces the differentiation of specific T-cell subsets such as IL-17 producing helper T-cells (TH17) and also proliferation and differentiation of mast cells. Mechanistically, exerts its biological effects through a receptor composed of IL9R subunit and a signal transducing subunit IL2RG. Receptor stimulation results in the rapid activation of JAK1 and JAK3 kinase activities leading to STAT1, STAT3 and STAT5-mediated transcriptional programs. Induction of differentiation genes seems to be mediated by STAT1 alone, while protection of cells from apoptosis depends on STAT3 and STAT5. The polypeptide is Interleukin-9 (IL9) (Homo sapiens (Human)).